A 918-amino-acid polypeptide reads, in one-letter code: Cell surface glycoprotein 1 (918 aa).

Residues 1–34 (MTDTNEKIRSLFLTALMVFSVFAGTIAFSGGAAA) form the signal peptide. Asn37, Asn56, Asn110, Asn219, Asn250, Asn261, and Asn291 each carry an N-linked (GlcNAc...) asparagine glycan. Asn306 carries N-linked (GalNAc...) asparagine glycosylation. 14 N-linked (GlcNAc...) asparagine glycosylation sites follow: Asn318, Asn343, Asn392, Asn434, Asn487, Asn541, Asn555, Asn572, Asn585, Asn614, Asn715, Asn776, Asn836, and Asn845. Residues 815–894 (HQDTNGNEAY…DESETTAAEG (80 aa)) are disordered. Residues 833–846 (YTQNGSAVTDSANV) show a composition bias toward polar residues. A compositionally biased stretch (acidic residues) spans 849 to 875 (VEEEQTEAPDTETETEAPDTETEEETD). The helical transmembrane segment at 894–914 (GPGFTAAIALIALVAAALLAV) threads the bilayer. The PGF sorting signal signature appears at 895 to 897 (PGF).

The protein belongs to the halobacterial S-layer protein family. In terms of processing, N-glycosylated on Asn-306; this N-linked glycan is a branched trisaccharide containing 2-amino-6-sulfo-2,6-dideoxy-glucose (sulfoquinovosamine). Cleaved by the archaeosortase ArtA at the C-terminus, with removal of a short hydrophobic segment. Post-translationally, lipidation.

It localises to the secreted. The protein localises to the cell wall. It is found in the S-layer. Its subcellular location is the cell membrane. S-layer protein. The S-layer is a paracrystalline mono-layered assembly of proteins which coat the surface of the cell. In H.hispanica, the S-layer contains two different glycoproteins, Slg1 and Slg2, which share highly similar amino acid sequences. In Haloarcula hispanica (strain ATCC 33960 / DSM 4426 / JCM 8911 / NBRC 102182 / NCIMB 2187 / VKM B-1755), this protein is Cell surface glycoprotein 1.